A 467-amino-acid chain; its full sequence is Cysteine--tRNA ligase (467 aa).

Residue Cys-29 participates in Zn(2+) binding. The 'HIGH' region signature appears at 31 to 41 (PTVYNYVHIGN). Zn(2+) is bound by residues Cys-209, His-234, and Glu-238. Residues 267–271 (KMSKS) carry the 'KMSKS' region motif. Residue Lys-270 participates in ATP binding.

The protein belongs to the class-I aminoacyl-tRNA synthetase family. As to quaternary structure, monomer. Zn(2+) serves as cofactor.

It is found in the cytoplasm. The catalysed reaction is tRNA(Cys) + L-cysteine + ATP = L-cysteinyl-tRNA(Cys) + AMP + diphosphate. The polypeptide is Cysteine--tRNA ligase (Xylella fastidiosa (strain 9a5c)).